Consider the following 777-residue polypeptide: 1,4-alpha-glucan branching enzyme GlgB (777 aa).

Catalysis depends on D408, which acts as the Nucleophile. E461 acts as the Proton donor in catalysis.

It belongs to the glycosyl hydrolase 13 family. GlgB subfamily. Monomer.

It carries out the reaction Transfers a segment of a (1-&gt;4)-alpha-D-glucan chain to a primary hydroxy group in a similar glucan chain.. It participates in glycan biosynthesis; glycogen biosynthesis. Catalyzes the formation of the alpha-1,6-glucosidic linkages in glycogen by scission of a 1,4-alpha-linked oligosaccharide from growing alpha-1,4-glucan chains and the subsequent attachment of the oligosaccharide to the alpha-1,6 position. The sequence is that of 1,4-alpha-glucan branching enzyme GlgB from Actinobacillus pleuropneumoniae serotype 7 (strain AP76).